Reading from the N-terminus, the 360-residue chain is Phosphoserine aminotransferase (360 aa).

Position 42 (Arg42) interacts with L-glutamate. Residues 76–77, Trp102, Thr152, Asp172, and Gln195 contribute to the pyridoxal 5'-phosphate site; that span reads AS. N6-(pyridoxal phosphate)lysine is present on Lys196. 237–238 provides a ligand contact to pyridoxal 5'-phosphate; it reads NT.

It belongs to the class-V pyridoxal-phosphate-dependent aminotransferase family. SerC subfamily. As to quaternary structure, homodimer. Pyridoxal 5'-phosphate serves as cofactor.

The protein resides in the cytoplasm. It carries out the reaction O-phospho-L-serine + 2-oxoglutarate = 3-phosphooxypyruvate + L-glutamate. The catalysed reaction is 4-(phosphooxy)-L-threonine + 2-oxoglutarate = (R)-3-hydroxy-2-oxo-4-phosphooxybutanoate + L-glutamate. It participates in amino-acid biosynthesis; L-serine biosynthesis; L-serine from 3-phospho-D-glycerate: step 2/3. Its function is as follows. Catalyzes the reversible conversion of 3-phosphohydroxypyruvate to phosphoserine and of 3-hydroxy-2-oxo-4-phosphonooxybutanoate to phosphohydroxythreonine. In Bacillus cereus (strain ATCC 10987 / NRS 248), this protein is Phosphoserine aminotransferase.